Reading from the N-terminus, the 906-residue chain is Protein translocase subunit SecA (906 aa).

ATP-binding positions include Gln89, 107–111 (GEGKT), and Asp502. 4 residues coordinate Zn(2+): Cys890, Cys892, Cys901, and His902.

It belongs to the SecA family. Monomer and homodimer. Part of the essential Sec protein translocation apparatus which comprises SecA, SecYEG and auxiliary proteins SecDF-YajC and YidC. Zn(2+) serves as cofactor.

It is found in the cell inner membrane. It localises to the cytoplasm. The catalysed reaction is ATP + H2O + cellular proteinSide 1 = ADP + phosphate + cellular proteinSide 2.. Part of the Sec protein translocase complex. Interacts with the SecYEG preprotein conducting channel. Has a central role in coupling the hydrolysis of ATP to the transfer of proteins into and across the cell membrane, serving both as a receptor for the preprotein-SecB complex and as an ATP-driven molecular motor driving the stepwise translocation of polypeptide chains across the membrane. The chain is Protein translocase subunit SecA from Brucella canis (strain ATCC 23365 / NCTC 10854 / RM-666).